Reading from the N-terminus, the 213-residue chain is Ribosomal RNA large subunit methyltransferase E (213 aa).

Residues G59, F61, D79, D97, and D121 each contribute to the S-adenosyl-L-methionine site. Catalysis depends on K161, which acts as the Proton acceptor.

Belongs to the class I-like SAM-binding methyltransferase superfamily. RNA methyltransferase RlmE family.

The protein resides in the cytoplasm. The enzyme catalyses uridine(2552) in 23S rRNA + S-adenosyl-L-methionine = 2'-O-methyluridine(2552) in 23S rRNA + S-adenosyl-L-homocysteine + H(+). Its function is as follows. Specifically methylates the uridine in position 2552 of 23S rRNA at the 2'-O position of the ribose in the fully assembled 50S ribosomal subunit. This Myxococcus xanthus (strain DK1622) protein is Ribosomal RNA large subunit methyltransferase E.